We begin with the raw amino-acid sequence, 235 residues long: Dephospho-CoA kinase (235 aa).

The DPCK domain occupies 15–219 (NVGLTGSISC…KKERLQRKSA (205 aa)). 23–28 (SCGKST) contributes to the ATP binding site.

It belongs to the CoaE family.

It localises to the cytoplasm. It carries out the reaction 3'-dephospho-CoA + ATP = ADP + CoA + H(+). Its pathway is cofactor biosynthesis; coenzyme A biosynthesis; CoA from (R)-pantothenate: step 5/5. In terms of biological role, catalyzes the phosphorylation of the 3'-hydroxyl group of dephosphocoenzyme A to form coenzyme A. This is Dephospho-CoA kinase from Syntrophus aciditrophicus (strain SB).